Reading from the N-terminus, the 1196-residue chain is Ice nucleation protein (1196 aa).

The octapeptide periodicity stretch occupies residues 172–1147; sequence ATYGSTLSGD…LSAGEDSTLI (976 aa). 3 disordered regions span residues 269–304, 319–352, and 415–442; these read GYGS…GYGS, GSTQ…GYGS, and GSTQ…GSNL. Polar residues-rich tracts occupy residues 271–298 and 319–346; these read GSTQ…GSNL.

It belongs to the bacterial ice nucleation protein family. In terms of assembly, membrane environment or aggregation seems to be required for ice nucleation activity.

The protein resides in the cell outer membrane. In terms of biological role, ice nucleation proteins enable bacteria to nucleate crystallization in supercooled water. The chain is Ice nucleation protein (inaV) from Pseudomonas syringae.